The following is a 205-amino-acid chain: Large ribosomal subunit protein uL4 (205 aa).

Residues 54 to 78 (GDISGTTAKPHRQKHTGRARQGSLR) form a disordered region. Residues 62-71 (KPHRQKHTGR) are compositionally biased toward basic residues.

This sequence belongs to the universal ribosomal protein uL4 family. In terms of assembly, part of the 50S ribosomal subunit.

Its function is as follows. One of the primary rRNA binding proteins, this protein initially binds near the 5'-end of the 23S rRNA. It is important during the early stages of 50S assembly. It makes multiple contacts with different domains of the 23S rRNA in the assembled 50S subunit and ribosome. Forms part of the polypeptide exit tunnel. The chain is Large ribosomal subunit protein uL4 from Ehrlichia chaffeensis (strain ATCC CRL-10679 / Arkansas).